The primary structure comprises 443 residues: Eukaryotic translation initiation factor 3 subunit E (443 aa).

The region spanning 249–417 (LDLFFNAGFI…GTVVMNHPPS (169 aa)) is the PCI domain.

Belongs to the eIF-3 subunit E family. As to quaternary structure, component of the eukaryotic translation initiation factor 3 (eIF-3) complex.

The protein localises to the cytoplasm. In terms of biological role, component of the eukaryotic translation initiation factor 3 (eIF-3) complex, which is involved in protein synthesis of a specialized repertoire of mRNAs and, together with other initiation factors, stimulates binding of mRNA and methionyl-tRNAi to the 40S ribosome. The eIF-3 complex specifically targets and initiates translation of a subset of mRNAs involved in cell proliferation. This is Eukaryotic translation initiation factor 3 subunit E (int-6) from Neurospora crassa (strain ATCC 24698 / 74-OR23-1A / CBS 708.71 / DSM 1257 / FGSC 987).